The following is a 267-amino-acid chain: MSFDVYVIRVFGKSRGSREAGMSVSAGLEVAAGSVASALAAQEGGAMRVELCHGLGGGGLTPSYGMLAVVRERLHIPLYVLIRPRGGDFVFSEEEMEVMCCDVECCVRLGCDGVVLGALDPAGEVDMGMMRVLIAVAGSLGVTFHRAIDVSADPGRTLEDVIALGCERVLTSGGRSSALEGAETIAALVAQAAGRVVVMPGAGVSAGNVLELRVRTGAHEFHASARSVVAARRLGPHPDIHDLGGDYDCTDVDKVRQLVRLLSQGAS.

Belongs to the CutC family.

It is found in the cytoplasm. This chain is PF03932 family protein CutC, found in Xylella fastidiosa (strain 9a5c).